The chain runs to 338 residues: MHIAALHQPSQVQLNQDGNLKHFLTIEGLSKENLTKILDTAQSFLDDNNNLINRPLLEGRTVMNLFFENSTRTRTTFEAAAKRLSANVLNIDIARSSTSKGETLRDTLWNLEAMAADIFVVRHSSSGAAHFIAKDVCPKVAIINAGDGRHAHPTQAMLDMLTIRRETKKPFEDLSVAIIGDIKHSRVARSDVAALQTLGCKDIRVIAPNTLLPVGFSEYGDHVRLFNNMDEGITGCDVIIALRIQNERIDSPALSSQSEFYRMYGLNKERLSLAKPDCIVMHPGPMNRGVEIDSSIADGEQSVILKQVTNGIAVRMAVLALSMQGQLQEQGLIEAIAL.

Residues Arg72 and Thr73 each contribute to the carbamoyl phosphate site. L-aspartate is bound at residue Lys100. Arg122, His152, and Gln155 together coordinate carbamoyl phosphate. L-aspartate contacts are provided by Arg186 and Arg243. Positions 284 and 285 each coordinate carbamoyl phosphate.

This sequence belongs to the aspartate/ornithine carbamoyltransferase superfamily. ATCase family. In terms of assembly, heterododecamer (2C3:3R2) of six catalytic PyrB chains organized as two trimers (C3), and six regulatory PyrI chains organized as three dimers (R2).

It carries out the reaction carbamoyl phosphate + L-aspartate = N-carbamoyl-L-aspartate + phosphate + H(+). Its pathway is pyrimidine metabolism; UMP biosynthesis via de novo pathway; (S)-dihydroorotate from bicarbonate: step 2/3. Catalyzes the condensation of carbamoyl phosphate and aspartate to form carbamoyl aspartate and inorganic phosphate, the committed step in the de novo pyrimidine nucleotide biosynthesis pathway. The sequence is that of Aspartate carbamoyltransferase catalytic subunit from Acinetobacter baumannii (strain ACICU).